The primary structure comprises 434 residues: Putative ankyrin repeat protein FPV219 (434 aa).

7 ANK repeats span residues aspartate 33–leucine 62, glutamate 66–cysteine 95, histidine 101–tyrosine 131, threonine 132–threonine 161, leucine 165–serine 195, leucine 196–alanine 225, and glutamate 229–isoleucine 258.

This chain is Putative ankyrin repeat protein FPV219, found in Fowlpox virus (strain NVSL) (FPV).